Reading from the N-terminus, the 447-residue chain is N-succinylarginine dihydrolase (447 aa).

Substrate is bound by residues Ala-19–Ser-28, Asn-110, and His-137–Arg-138. The active site involves Glu-174. Arg-212 lines the substrate pocket. His-248 is a catalytic residue. 2 residues coordinate substrate: Asp-250 and Asn-359. Cys-365 serves as the catalytic Nucleophile.

Belongs to the succinylarginine dihydrolase family. In terms of assembly, homodimer.

The enzyme catalyses N(2)-succinyl-L-arginine + 2 H2O + 2 H(+) = N(2)-succinyl-L-ornithine + 2 NH4(+) + CO2. The protein operates within amino-acid degradation; L-arginine degradation via AST pathway; L-glutamate and succinate from L-arginine: step 2/5. Its function is as follows. Catalyzes the hydrolysis of N(2)-succinylarginine into N(2)-succinylornithine, ammonia and CO(2). In Escherichia coli O157:H7, this protein is N-succinylarginine dihydrolase.